Here is a 483-residue protein sequence, read N- to C-terminus: Regulatory protein ViaA (483 aa).

This sequence belongs to the ViaA family. As to quaternary structure, homodimer. Interacts with RavA.

It is found in the cytoplasm. In terms of biological role, component of the RavA-ViaA chaperone complex, which may act on the membrane to optimize the function of some of the respiratory chains. ViaA stimulates the ATPase activity of RavA. The protein is Regulatory protein ViaA of Escherichia coli (strain SMS-3-5 / SECEC).